A 425-amino-acid polypeptide reads, in one-letter code: Enolase (425 aa).

Residue glutamine 163 participates in (2R)-2-phosphoglycerate binding. The active-site Proton donor is glutamate 205. Positions 242, 285, and 312 each coordinate Mg(2+). Residues lysine 337, arginine 366, serine 367, and lysine 388 each coordinate (2R)-2-phosphoglycerate. Lysine 337 acts as the Proton acceptor in catalysis.

Belongs to the enolase family. The cofactor is Mg(2+).

It is found in the cytoplasm. Its subcellular location is the secreted. The protein localises to the cell surface. It catalyses the reaction (2R)-2-phosphoglycerate = phosphoenolpyruvate + H2O. Its pathway is carbohydrate degradation; glycolysis; pyruvate from D-glyceraldehyde 3-phosphate: step 4/5. In terms of biological role, catalyzes the reversible conversion of 2-phosphoglycerate (2-PG) into phosphoenolpyruvate (PEP). It is essential for the degradation of carbohydrates via glycolysis. The chain is Enolase from Granulibacter bethesdensis (strain ATCC BAA-1260 / CGDNIH1).